The chain runs to 320 residues: Tetraacyldisaccharide 4'-kinase (320 aa).

Residue 53–60 (SVGGNGKT) coordinates ATP.

This sequence belongs to the LpxK family.

It carries out the reaction a lipid A disaccharide + ATP = a lipid IVA + ADP + H(+). It participates in glycolipid biosynthesis; lipid IV(A) biosynthesis; lipid IV(A) from (3R)-3-hydroxytetradecanoyl-[acyl-carrier-protein] and UDP-N-acetyl-alpha-D-glucosamine: step 6/6. In terms of biological role, transfers the gamma-phosphate of ATP to the 4'-position of a tetraacyldisaccharide 1-phosphate intermediate (termed DS-1-P) to form tetraacyldisaccharide 1,4'-bis-phosphate (lipid IVA). This is Tetraacyldisaccharide 4'-kinase from Psychromonas ingrahamii (strain DSM 17664 / CCUG 51855 / 37).